Reading from the N-terminus, the 396-residue chain is Tryptophan synthase beta chain (396 aa).

Lys-86 carries the post-translational modification N6-(pyridoxal phosphate)lysine.

It belongs to the TrpB family. As to quaternary structure, tetramer of two alpha and two beta chains. Pyridoxal 5'-phosphate is required as a cofactor.

The catalysed reaction is (1S,2R)-1-C-(indol-3-yl)glycerol 3-phosphate + L-serine = D-glyceraldehyde 3-phosphate + L-tryptophan + H2O. It participates in amino-acid biosynthesis; L-tryptophan biosynthesis; L-tryptophan from chorismate: step 5/5. Functionally, the beta subunit is responsible for the synthesis of L-tryptophan from indole and L-serine. This is Tryptophan synthase beta chain from Vibrio vulnificus (strain CMCP6).